We begin with the raw amino-acid sequence, 502 residues long: ATP synthase subunit alpha 1/3 (502 aa).

Residue 169–176 coordinates ATP; that stretch reads GDRQTGKT.

The protein belongs to the ATPase alpha/beta chains family. In terms of assembly, F-type ATPases have 2 components, CF(1) - the catalytic core - and CF(0) - the membrane proton channel. CF(1) has five subunits: alpha(3), beta(3), gamma(1), delta(1), epsilon(1). CF(0) has three main subunits: a(1), b(2) and c(9-12). The alpha and beta chains form an alternating ring which encloses part of the gamma chain. CF(1) is attached to CF(0) by a central stalk formed by the gamma and epsilon chains, while a peripheral stalk is formed by the delta and b chains.

It is found in the cell inner membrane. The catalysed reaction is ATP + H2O + 4 H(+)(in) = ADP + phosphate + 5 H(+)(out). Its function is as follows. Produces ATP from ADP in the presence of a proton gradient across the membrane. The alpha chain is a regulatory subunit. The polypeptide is ATP synthase subunit alpha 1/3 (Syntrophotalea carbinolica (strain DSM 2380 / NBRC 103641 / GraBd1) (Pelobacter carbinolicus)).